The sequence spans 717 residues: Mitotic spindle assembly checkpoint protein MAD1 (717 aa).

At M1 the chain carries N-acetylmethionine. Phosphoserine is present on S16. Residues 46 to 631 (EQSMQLEERA…QTKIQEFRKV (586 aa)) are a coiled coil. The residue at position 61 (K61) is an N6-acetyllysine; alternate. K61 is covalently cross-linked (Glycyl lysine isopeptide (Lys-Gly) (interchain with G-Cter in SUMO2); alternate). Positions 79 to 82 (KRAR) match the Nuclear localization signal motif. Phosphoserine occurs at positions 214 and 428. A necessary for interaction with NEK2 region spans residues 380 to 532 (LLEERKKREI…EMQMERLTLQ (153 aa)). A necessary for interaction with MAD2L1 region spans residues 540–551 (TKVLHMSLNPAS).

This sequence belongs to the MAD1 family. Homodimer. Dimerizes via its N- and C- terminal regions. Heterodimerizes with MAD2L1 in order to form a tetrameric MAD1L1-MAD2L1 core complex. Interacts with the closed conformation form of MAD2L1 (C-MAD2) and open conformation form of MAD2L1 (O-MAD2). It is unclear whether MAD1L1 dimerization promotes the conversion of closed to open conformation of MAD2L1. Formation of a heterotetrameric core complex containing two molecules each of MAD1L1 and of MAD2L1 promotes binding of another molecule of MAD2L1 to each MAD2L1, resulting in a heterohexamer. Perturbation of the original MAD1L1-MAD2L1 structure by the spindle checkpoint may decrease MAD2L1 affinity for MAD1L1. CDC20 can compete with MAD1L1 for MAD2L1 binding, until the attachment and/or tension dampen the checkpoint signal, preventing further release of MAD2L1 on to CDC20. Also able to interact with the BUB1/BUB3 complex. Interacts with NEK2. Interacts with TTK. Interacts with TPR; the interactions occurs in a microtubule-independent manner. Interacts with IK. Interacts with the viral Tax protein. Interacts with PRAP1. Phosphorylated; by BUB1. Become hyperphosphorylated in late S through M phases or after mitotic spindle damage.

It localises to the nucleus. It is found in the chromosome. Its subcellular location is the centromere. The protein localises to the kinetochore. The protein resides in the nucleus envelope. It localises to the cytoplasm. It is found in the cytoskeleton. Its subcellular location is the microtubule organizing center. The protein localises to the centrosome. The protein resides in the spindle. It localises to the spindle pole. Functionally, component of the spindle-assembly checkpoint that prevents the onset of anaphase until all chromosomes are properly aligned at the metaphase plate. Forms a heterotetrameric complex with the closed conformation form of MAD2L1 (C-MAD2) at unattached kinetochores during prometaphase, recruits an open conformation of MAD2L1 (O-MAD2) and promotes the conversion of O-MAD2 to C-MAD2, which ensures mitotic checkpoint signaling. The chain is Mitotic spindle assembly checkpoint protein MAD1 (MAD1L1) from Cricetulus griseus (Chinese hamster).